The primary structure comprises 1388 residues: Rho-associated protein kinase 2 (1388 aa).

Residues 1-24 (MSRPPPTGKMPGAPEAAAGDGAGA) are disordered. Residues 92 to 354 (YDVVKVIGRG…VEEIKSASFF (263 aa)) form the Protein kinase domain. ATP contacts are provided by residues 98–106 (IGRGAFGEV) and Lys121. The active-site Proton acceptor is Asp214. One can recognise an AGC-kinase C-terminal domain in the interval 357–425 (DQWNWDNIRE…FRENLLLSDS (69 aa)). Positions 363 to 784 (NIRETAAPVV…LNELLKQKDV (422 aa)) are interaction with PPP1R12A. The interval 373-420 (PELSSDIDSSNFDDIEDDKGDVETFPIPKAFVGNQLPFIGFTYFRENL) is interaction with NPM1. A Phosphothreonine; by ROCK2 modification is found at Thr414. 2 coiled-coil regions span residues 439–1024 (SEES…EKQL) and 1052–1131 (SDTD…IGMD). One can recognise an REM-1 domain in the interval 497-573 (TLRQLEREKA…LDEANALLRT (77 aa)). Residues 513-530 (AEYQRKADHEADKKRNLE) are compositionally biased toward basic and acidic residues. The tract at residues 513–532 (AEYQRKADHEADKKRNLEND) is disordered. Position 722 is a phosphotyrosine; by SRC (Tyr722). Residues 979-1047 (TSDVANLANE…LAEIMNRKEP (69 aa)) form the RhoBD domain. Residues 979–1047 (TSDVANLANE…LAEIMNRKEP (69 aa)) are RHOA binding. Position 1137 is a phosphoserine (Ser1137). In terms of domain architecture, PH spans 1150–1349 (ESRLEGWLSL…WVSRLVKKIP (200 aa)). Thr1212 bears the Phosphothreonine mark. Residues 1260–1315 (GHEFIPTLYHFPTNCEACMKPLWHMFKPPPALECSRCHIKCHKDHMDKKEEIIAPC) form a Phorbol-ester/DAG-type zinc finger. The segment at 1345-1388 (VKKIPKKPPAPDPFARSSPRTSMKIQQNQSIRRPSRQLAPNKPS) is disordered. 2 positions are modified to phosphoserine: Ser1362 and Ser1374. Residues 1362 to 1376 (SPRTSMKIQQNQSIR) are compositionally biased toward polar residues.

It belongs to the protein kinase superfamily. AGC Ser/Thr protein kinase family. In terms of assembly, homodimer. Interacts with IRS1. Interacts with RAF1. Interacts with RHOA (activated by GTP), RHOB, RHOC. Interacts with PPP1R12A. Interacts with EP300. Interacts with CHORDC1. Interacts with BRCA2. Interacts with NPM1; this interaction enhances its activity. Interacts with SORL1. Interacts with PJVK. Requires Mg(2+) as cofactor. In terms of processing, autophosphorylated. Phosphorylation at Tyr-722 reduces its binding to RHOA and is crucial for focal adhesion dynamics. Dephosphorylation by PTPN11 stimulates its RHOA binding activity. Cleaved by granzyme B during apoptosis. This leads to constitutive activation of the kinase and membrane blebbing. In terms of tissue distribution, highly expressed in brain, lung, liver, skeletal muscle, kidney and testis.

It localises to the cytoplasm. The protein resides in the cell membrane. Its subcellular location is the nucleus. The protein localises to the cytoskeleton. It is found in the microtubule organizing center. It localises to the centrosome. It catalyses the reaction L-seryl-[protein] + ATP = O-phospho-L-seryl-[protein] + ADP + H(+). The catalysed reaction is L-threonyl-[protein] + ATP = O-phospho-L-threonyl-[protein] + ADP + H(+). Its activity is regulated as follows. Activated by RHOA binding. Inhibited by Y-27632. Its function is as follows. Protein kinase which is a key regulator of actin cytoskeleton and cell polarity. Involved in regulation of smooth muscle contraction, actin cytoskeleton organization, stress fiber and focal adhesion formation, neurite retraction, cell adhesion and motility via phosphorylation of ADD1, BRCA2, CNN1, EZR, DPYSL2, EP300, MSN, MYL9/MLC2, NPM1, RDX, PPP1R12A and VIM. Phosphorylates SORL1 and IRF4. Acts as a negative regulator of VEGF-induced angiogenic endothelial cell activation. Positively regulates the activation of p42/MAPK1-p44/MAPK3 and of p90RSK/RPS6KA1 during myogenic differentiation. Plays an important role in the timely initiation of centrosome duplication. Inhibits keratinocyte terminal differentiation. May regulate closure of the eyelids and ventral body wall through organization of actomyosin bundles. Plays a critical role in the regulation of spine and synaptic properties in the hippocampus. Plays a role in placental homeostasis during the perinatal period. Plays an important role in generating the circadian rhythm of the aortic myofilament Ca(2+) sensitivity and vascular contractility by modulating the myosin light chain phosphorylation. This chain is Rho-associated protein kinase 2 (Rock2), found in Rattus norvegicus (Rat).